Here is a 225-residue protein sequence, read N- to C-terminus: Holliday junction branch migration complex subunit RuvA (225 aa).

The tract at residues 1-71 (MISWINGDLV…EDSDLLFGFT (71 aa)) is domain I. A domain II region spans residues 72–150 (SNEQKNFFIE…SEILSEEEKS (79 aa)). The tract at residues 151-161 (KGELEIKDPEI) is flexible linker. The segment at 161-225 (INKMIEDLQL…LDEDSSNIAR (65 aa)) is domain III.

This sequence belongs to the RuvA family. In terms of assembly, homotetramer. Forms an RuvA(8)-RuvB(12)-Holliday junction (HJ) complex. HJ DNA is sandwiched between 2 RuvA tetramers; dsDNA enters through RuvA and exits via RuvB. An RuvB hexamer assembles on each DNA strand where it exits the tetramer. Each RuvB hexamer is contacted by two RuvA subunits (via domain III) on 2 adjacent RuvB subunits; this complex drives branch migration. In the full resolvosome a probable DNA-RuvA(4)-RuvB(12)-RuvC(2) complex forms which resolves the HJ.

It localises to the cytoplasm. The RuvA-RuvB-RuvC complex processes Holliday junction (HJ) DNA during genetic recombination and DNA repair, while the RuvA-RuvB complex plays an important role in the rescue of blocked DNA replication forks via replication fork reversal (RFR). RuvA specifically binds to HJ cruciform DNA, conferring on it an open structure. The RuvB hexamer acts as an ATP-dependent pump, pulling dsDNA into and through the RuvAB complex. HJ branch migration allows RuvC to scan DNA until it finds its consensus sequence, where it cleaves and resolves the cruciform DNA. This is Holliday junction branch migration complex subunit RuvA from Prochlorococcus marinus (strain MIT 9301).